The sequence spans 400 residues: MRFRSFFFSSSIFSLSHSRSPSLSSSRFSSLSAAMSPALEKSRQGNGGCNDDSKSKVTVVGSGNWGSVAAKLIASNALKLPSFHDEVRMWVFEEVLPNGEKLNDVINKTNENVKYLPGIKLGRNVVADPDLENAVKDANMLVFVTPHQFMDGICKKLDGKITGDVEAISLVKGMEVKKEGPCMISSLISKQLGINCCVLMGANIANEIAVEKFSEATVGYRGSREIADTWVQLFSTPYFMVTPVHDVEGVELCGTLKNVVAIAAGFVDGLEMGNNTKAAIMRIGLREMKALSKLLFPSVKDSTFFESCGVADVITTCLGGRNRRVAEAFAKSRGKRSFDELEAEMLQGQKLQGVSTAREVYEVLKHCGWLEMFPLFSTVHQICTGRLQPEAIVQYRENKL.

The transit peptide at Met1 to Ser32 directs the protein to the chloroplast. Residues Gly61 to Gly66, Phe92, Phe149, Lys172, and Ala205 contribute to the NAD(+) site. Lys172 lines the substrate pocket. Lys257 serves as the catalytic Proton acceptor. 3 residues coordinate NAD(+): Arg321, Lys350, and Gln352. A substrate-binding site is contributed by Arg321–Asn322.

Belongs to the NAD-dependent glycerol-3-phosphate dehydrogenase family. Expressed in young seedlings, flowers and siliques. Expressed at low levels in roots.

Its subcellular location is the plastid. The protein localises to the chloroplast. The catalysed reaction is sn-glycerol 3-phosphate + NAD(+) = dihydroxyacetone phosphate + NADH + H(+). Its pathway is membrane lipid metabolism; glycerophospholipid metabolism. Its function is as follows. Involved in glycerolipid metabolism. The sequence is that of Glycerol-3-phosphate dehydrogenase [NAD(+)] 1, chloroplastic (DHAPRD) from Arabidopsis thaliana (Mouse-ear cress).